The following is a 117-amino-acid chain: MARVKRGVIARARHKKVLKAAKGYYGARSRVYRVAFQAVIKAGQYAYRDRRQRKRQFRQLWIARINAAARQNSLSYSKFINGLKKASVEIDRKILADIAVFDKVAFTALVEKAKSVL.

It belongs to the bacterial ribosomal protein bL20 family.

In terms of biological role, binds directly to 23S ribosomal RNA and is necessary for the in vitro assembly process of the 50S ribosomal subunit. It is not involved in the protein synthesizing functions of that subunit. The polypeptide is Large ribosomal subunit protein bL20 (Actinobacillus succinogenes (strain ATCC 55618 / DSM 22257 / CCUG 43843 / 130Z)).